Consider the following 262-residue polypeptide: Acyl-[acyl-carrier-protein]--UDP-N-acetylglucosamine O-acyltransferase (262 aa).

The protein belongs to the transferase hexapeptide repeat family. LpxA subfamily. As to quaternary structure, homotrimer.

The protein resides in the cytoplasm. It catalyses the reaction a (3R)-hydroxyacyl-[ACP] + UDP-N-acetyl-alpha-D-glucosamine = a UDP-3-O-[(3R)-3-hydroxyacyl]-N-acetyl-alpha-D-glucosamine + holo-[ACP]. It functions in the pathway glycolipid biosynthesis; lipid IV(A) biosynthesis; lipid IV(A) from (3R)-3-hydroxytetradecanoyl-[acyl-carrier-protein] and UDP-N-acetyl-alpha-D-glucosamine: step 1/6. In terms of biological role, involved in the biosynthesis of lipid A, a phosphorylated glycolipid that anchors the lipopolysaccharide to the outer membrane of the cell. The sequence is that of Acyl-[acyl-carrier-protein]--UDP-N-acetylglucosamine O-acyltransferase from Salmonella paratyphi B (strain ATCC BAA-1250 / SPB7).